Reading from the N-terminus, the 509-residue chain is Bifunctional purine biosynthesis protein PurH (509 aa).

Residues 1 to 144 (MKRALISVSD…KNYAAVTVVV (144 aa)) enclose the MGS-like domain.

This sequence belongs to the PurH family.

The enzyme catalyses (6R)-10-formyltetrahydrofolate + 5-amino-1-(5-phospho-beta-D-ribosyl)imidazole-4-carboxamide = 5-formamido-1-(5-phospho-D-ribosyl)imidazole-4-carboxamide + (6S)-5,6,7,8-tetrahydrofolate. It carries out the reaction IMP + H2O = 5-formamido-1-(5-phospho-D-ribosyl)imidazole-4-carboxamide. It participates in purine metabolism; IMP biosynthesis via de novo pathway; 5-formamido-1-(5-phospho-D-ribosyl)imidazole-4-carboxamide from 5-amino-1-(5-phospho-D-ribosyl)imidazole-4-carboxamide (10-formyl THF route): step 1/1. The protein operates within purine metabolism; IMP biosynthesis via de novo pathway; IMP from 5-formamido-1-(5-phospho-D-ribosyl)imidazole-4-carboxamide: step 1/1. This is Bifunctional purine biosynthesis protein PurH from Listeria welshimeri serovar 6b (strain ATCC 35897 / DSM 20650 / CCUG 15529 / CIP 8149 / NCTC 11857 / SLCC 5334 / V8).